The following is an 89-amino-acid chain: Large ribosomal subunit protein bL31B (89 aa).

This sequence belongs to the bacterial ribosomal protein bL31 family. Type B subfamily. In terms of assembly, part of the 50S ribosomal subunit.

The protein is Large ribosomal subunit protein bL31B of Corynebacterium urealyticum (strain ATCC 43042 / DSM 7109).